The chain runs to 267 residues: Indole-3-glycerol phosphate synthase (267 aa).

Belongs to the TrpC family.

The enzyme catalyses 1-(2-carboxyphenylamino)-1-deoxy-D-ribulose 5-phosphate + H(+) = (1S,2R)-1-C-(indol-3-yl)glycerol 3-phosphate + CO2 + H2O. Its pathway is amino-acid biosynthesis; L-tryptophan biosynthesis; L-tryptophan from chorismate: step 4/5. The polypeptide is Indole-3-glycerol phosphate synthase (Delftia acidovorans (strain DSM 14801 / SPH-1)).